The primary structure comprises 251 residues: ATP synthase subunit a (251 aa).

7 consecutive transmembrane segments (helical) span residues 28–48 (FTQSNEIMVLGTAIVLGIIAL), 63–80 (LVEISYNFIMGLCIEQIG), 86–106 (FFPFIFTLFFFVLMGNLLGLF), 115–135 (HVAVTGGLAVLVIVLVTAVAL), 154–176 (ALAPIIVPIEIISYLSRPVSLSI), 195–215 (FMFLLIGALGTFGYFAALLPM), and 219–239 (VTLVGFELLVAFLQAYVFAIL).

This sequence belongs to the ATPase A chain family. F-type ATPases have 2 components, CF(1) - the catalytic core - and CF(0) - the membrane proton channel. CF(1) has five subunits: alpha(3), beta(3), gamma(1), delta(1), epsilon(1). CF(0) has three main subunits: a(1), b(2) and c(9-12). The alpha and beta chains form an alternating ring which encloses part of the gamma chain. CF(1) is attached to CF(0) by a central stalk formed by the gamma and epsilon chains, while a peripheral stalk is formed by the delta and b chains.

The protein resides in the cell inner membrane. Its function is as follows. Key component of the proton channel; it plays a direct role in the translocation of protons across the membrane. The sequence is that of ATP synthase subunit a from Granulibacter bethesdensis (strain ATCC BAA-1260 / CGDNIH1).